Reading from the N-terminus, the 1653-residue chain is Clathrin heavy chain (1653 aa).

A globular terminal domain region spans residues 1 to 483 (MSDLPIEFTE…FDTTLALACY (483 aa)). WD40-like repeat stretches follow at residues 23–66 (FLDF…KNMG), 67–107 (GDSA…LDEP), 108–152 (VIFW…ANLN), 153–198 (NTQI…QAID), 199–263 (GHVA…PDAT), 264–307 (NDFP…ITAE), and 308–336 (SVFTAAPYNHENGIACINKKGQVLAVEIS). A binding site for the uncoating ATPase, involved in lattice disassembly region spans residues 453 to 469 (EKWLKEDKLECSEELGD). The flexible linker stretch occupies residues 484–527 (LRAGAHAKVISCLAELQQFEKIIPYCQKVGYQPNFLVLISSLIR). A heavy chain arm region spans residues 528-1653 (SSPDRASEFA…SAMNVQPTGF (1126 aa)). CHCR repeat units follow at residues 543–689 (NPET…QTVV), 692–834 (ATKF…DEAF), 839–978 (LQSV…QLID), 985–1130 (IPEL…IPDA), 1134–1275 (YIKA…FKLA), 1280–1426 (LNLI…SLLV), and 1429–1572 (LTSL…REGF). Residue lysine 1107 forms a Glycyl lysine isopeptide (Lys-Gly) (interchain with G-Cter in ubiquitin) linkage. The involved in binding clathrin light chain stretch occupies residues 1219-1528 (AARLCYSAVS…LLYRRNKKWA (310 aa)).

This sequence belongs to the clathrin heavy chain family. In terms of assembly, clathrin triskelions, composed of 3 heavy chains and 3 light chains, are the basic subunits of the clathrin coat. Interacts with the auxilin-like clathrin uncoating factor SWA2. Interacts with INP53.

The protein resides in the cytoplasmic vesicle membrane. It localises to the membrane. The protein localises to the coated pit. Its function is as follows. Clathrin is the major protein of the polyhedral coat of coated pits and vesicles. In yeast, it is involved in the retention of proteins in an intracellular membrane compartment, presumably the trans-Golgi. The polypeptide is Clathrin heavy chain (CHC1) (Saccharomyces cerevisiae (strain ATCC 204508 / S288c) (Baker's yeast)).